We begin with the raw amino-acid sequence, 159 residues long: Ribosomal RNA large subunit methyltransferase H (159 aa).

S-adenosyl-L-methionine-binding positions include leucine 76, glycine 108, and 127-132 (FSPMTF).

It belongs to the RNA methyltransferase RlmH family. Homodimer.

It localises to the cytoplasm. It catalyses the reaction pseudouridine(1915) in 23S rRNA + S-adenosyl-L-methionine = N(3)-methylpseudouridine(1915) in 23S rRNA + S-adenosyl-L-homocysteine + H(+). Its function is as follows. Specifically methylates the pseudouridine at position 1915 (m3Psi1915) in 23S rRNA. The chain is Ribosomal RNA large subunit methyltransferase H from Alkaliphilus oremlandii (strain OhILAs) (Clostridium oremlandii (strain OhILAs)).